Here is a 292-residue protein sequence, read N- to C-terminus: Probable 2-(5''-triphosphoribosyl)-3'-dephosphocoenzyme-A synthase (292 aa).

This sequence belongs to the CitG/MdcB family.

It carries out the reaction 3'-dephospho-CoA + ATP = 2'-(5''-triphospho-alpha-D-ribosyl)-3'-dephospho-CoA + adenine. In Shigella flexneri, this protein is Probable 2-(5''-triphosphoribosyl)-3'-dephosphocoenzyme-A synthase.